The sequence spans 47 residues: Ribosome-inactivating protein luffin P1 (47 aa).

2 disulfides stabilise this stretch: cysteine 12–cysteine 33 and cysteine 16–cysteine 29.

As to quaternary structure, homotetramer.

The enzyme catalyses Endohydrolysis of the N-glycosidic bond at one specific adenosine on the 28S rRNA.. Its function is as follows. Inhibits protein synthesis in animal cells. The sequence is that of Ribosome-inactivating protein luffin P1 from Luffa aegyptiaca (Sponge gourd).